Reading from the N-terminus, the 164-residue chain is Putative pre-16S rRNA nuclease (164 aa).

It belongs to the YqgF nuclease family.

It is found in the cytoplasm. In terms of biological role, could be a nuclease involved in processing of the 5'-end of pre-16S rRNA. The polypeptide is Putative pre-16S rRNA nuclease (Rhizobium rhizogenes (strain K84 / ATCC BAA-868) (Agrobacterium radiobacter)).